A 61-amino-acid chain; its full sequence is Putative defensin-like protein 72 (61 aa).

4 cysteine pairs are disulfide-bonded: cysteine 21-cysteine 59, cysteine 25-cysteine 48, cysteine 34-cysteine 57, and cysteine 38-cysteine 58.

The protein belongs to the DEFL family.

This Arabidopsis thaliana (Mouse-ear cress) protein is Putative defensin-like protein 72.